A 789-amino-acid chain; its full sequence is 1-phosphatidylinositol 4,5-bisphosphate phosphodiesterase delta-3 (789 aa).

Residues 63 to 172 (RAMLRGSRLR…WVRGLTKLRA (110 aa)) form the PH domain. The segment at 73-101 (KIRSRTWHKERLYRLQEDGLSVWFQRRIP) is substrate binding. Residue Ser-105 is modified to Phosphoserine. EF-hand domains are found at residues 182-217 (RLDHWIHSYLHRADSNQDSKMSFKEIKSLLRMVNVD), 218-253 (MNDMYAYLLFKECDHSNNDRLEGAEIEEFLRRLLKR), and 250-285 (LLKRPELEEIFHQYSGEDRVLSAPELLEFLEDQGEE). Ca(2+) contacts are provided by Asp-195, Asn-197, Asp-199, Lys-201, Glu-206, Asp-231, Ser-233, Asn-235, Arg-237, and Glu-242. In terms of domain architecture, PI-PLC X-box spans 337–482 (QDMNQPLAHY…LKGRVLVKGK (146 aa)). His-352 is an active-site residue. Asn-353, Glu-382, and Asp-384 together coordinate Ca(2+). The active site involves His-397. A Ca(2+)-binding site is contributed by Glu-431. The segment at 461–519 (SPNPEELPSPEQLKGRVLVKGKKLPAARSEDGRALSDREEEEEDDEEEEEEVEAAAQRR) is disordered. Residues Lys-480 and Lys-482 each coordinate substrate. Positions 488–497 (RSEDGRALSD) are enriched in basic and acidic residues. A Phosphoserine modification is found at Ser-496. Residues 498–513 (REEEEEDDEEEEEEVE) are compositionally biased toward acidic residues. In terms of domain architecture, PI-PLC Y-box spans 528–644 (LSALAVYCHA…GYVLKPACLR (117 aa)). Ser-557 contributes to the substrate binding site. Ser-573 carries the phosphoserine modification. Arg-584 lines the substrate pocket. One can recognise a C2 domain in the interval 644-769 (RQPDSTFDPE…QGYRHIHLLS (126 aa)). Residues Ile-683, Asp-685, Asn-709, Asp-738, Tyr-739, and Asp-740 each contribute to the Ca(2+) site.

Ca(2+) is required as a cofactor. As to expression, present in corneal epithelial cells (at protein level).

It localises to the membrane. The protein localises to the cytoplasm. Its subcellular location is the cleavage furrow. The enzyme catalyses a 1,2-diacyl-sn-glycero-3-phospho-(1D-myo-inositol-4,5-bisphosphate) + H2O = 1D-myo-inositol 1,4,5-trisphosphate + a 1,2-diacyl-sn-glycerol + H(+). With respect to regulation, strongly activated by phosphatidic acid. Inhibited by phosphatidylethanolamine (PtdEtn), phosphatidylcholine (PtdCho), sphingomyelin and phosphatidylserine (PtdSer). In terms of biological role, hydrolyzes the phosphatidylinositol 4,5-bisphosphate (PIP2) to generate 2 second messenger molecules diacylglycerol (DAG) and inositol 1,4,5-trisphosphate (IP3). DAG mediates the activation of protein kinase C (PKC), while IP3 releases Ca(2+) from intracellular stores. Essential for trophoblast and placental development. May participate in cytokinesis by hydrolyzing PIP2 at the cleavage furrow. Regulates neurite outgrowth through the inhibition of RhoA/Rho kinase signaling. The sequence is that of 1-phosphatidylinositol 4,5-bisphosphate phosphodiesterase delta-3 from Homo sapiens (Human).